A 123-amino-acid chain; its full sequence is Potassium voltage-gated channel subfamily E member 2 (123 aa).

N6 and N29 each carry an N-linked (GlcNAc...) asparagine glycan. Residues 49 to 69 traverse the membrane as a helical segment; sequence VILYLMVMIGMFSFIVVAILV. At 70-123 the chain is on the cytoplasmic side; sequence STVKSKRREHSQHPYHQYIVEDWQEKYKSQILHLEDSKATIHENMGATGFTVSP.

This sequence belongs to the potassium channel KCNE family. In terms of assembly, interacts with KCNB1. Associates with KCNH2/ERG1. May associate with KCNQ2 and KCNQ3. Associates with HCN1 and probably HCN2. Heteromultimer with KCNC2. Interacts with KCNC2. Interacts with KCNQ1. Forms a heterooligomer complex with KCNQ1 that targets to the membrane raft and leading to currents with an apparently instantaneous activation, a rapid deactivation process and a linear current-voltage relationship and decreases the amplitude of the outward current.

The protein localises to the cell membrane. The protein resides in the apical cell membrane. Ancillary protein that functions as a regulatory subunit of the voltage-gated potassium (Kv) channel complex composed of pore-forming and potassium-conducting alpha subunits and of regulatory beta subunits. KCNE2 beta subunit modulates the gating kinetics and enhances stability of the channel complex. Alters the gating of the delayed rectifier Kv channel containing KCNB1 alpha subunit. Associates with KCNH2/HERG alpha subunit Kv channel to form the rapidly activating component of the delayed rectifying potassium current (IKr) in heart. May associate with KCNQ2 and/or KCNQ3 alpha subunits to modulate the native M-type current. May associate with HCN1 and HCN2 channel subunits to increase potassium current. Forms a heterooligomer complex with KCNQ1/KVLQT1 alpha subunits which leads to currents with an apparently instantaneous activation, a rapid deactivation process and a linear current-voltage relationship and decreases the amplitude of the outward current. KCNQ1-KCNE2 channel associates with Na(+)-coupled myo-inositol symporter in the apical membrane of choroid plexus epithelium and regulates the myo-inositol gradient between blood and cerebrospinal fluid with an impact on neuron excitability. The protein is Potassium voltage-gated channel subfamily E member 2 of Mus musculus (Mouse).